We begin with the raw amino-acid sequence, 152 residues long: Xanthine-guanine phosphoribosyltransferase (152 aa).

5-phospho-alpha-D-ribose 1-diphosphate-binding positions include 37-38 (RG), Arg-69, and 88-96 (DDLVDTGGT). Arg-69 lines the GMP pocket. Residue Asp-89 coordinates Mg(2+). Guanine is bound by residues Asp-92 and Ile-135. Xanthine-binding residues include Asp-92 and Ile-135. GMP is bound by residues 92 to 96 (DTGGT) and 134 to 135 (WI).

The protein belongs to the purine/pyrimidine phosphoribosyltransferase family. XGPT subfamily. Homotetramer. It depends on Mg(2+) as a cofactor.

It localises to the cell inner membrane. It carries out the reaction GMP + diphosphate = guanine + 5-phospho-alpha-D-ribose 1-diphosphate. It catalyses the reaction XMP + diphosphate = xanthine + 5-phospho-alpha-D-ribose 1-diphosphate. The enzyme catalyses IMP + diphosphate = hypoxanthine + 5-phospho-alpha-D-ribose 1-diphosphate. The protein operates within purine metabolism; GMP biosynthesis via salvage pathway; GMP from guanine: step 1/1. It participates in purine metabolism; XMP biosynthesis via salvage pathway; XMP from xanthine: step 1/1. Its function is as follows. Purine salvage pathway enzyme that catalyzes the transfer of the ribosyl-5-phosphate group from 5-phospho-alpha-D-ribose 1-diphosphate (PRPP) to the N9 position of the 6-oxopurines guanine and xanthine to form the corresponding ribonucleotides GMP (guanosine 5'-monophosphate) and XMP (xanthosine 5'-monophosphate), with the release of PPi. To a lesser extent, also acts on hypoxanthine. This chain is Xanthine-guanine phosphoribosyltransferase, found in Enterobacter sp. (strain 638).